The primary structure comprises 445 residues: Phosphoglucosamine mutase (445 aa).

Serine 101 (phosphoserine intermediate) is an active-site residue. Residues serine 101, aspartate 240, aspartate 242, and aspartate 244 each coordinate Mg(2+). Serine 101 is modified (phosphoserine).

Belongs to the phosphohexose mutase family. Requires Mg(2+) as cofactor. In terms of processing, activated by phosphorylation.

It catalyses the reaction alpha-D-glucosamine 1-phosphate = D-glucosamine 6-phosphate. Catalyzes the conversion of glucosamine-6-phosphate to glucosamine-1-phosphate. In Pseudomonas fluorescens (strain Pf0-1), this protein is Phosphoglucosamine mutase.